A 130-amino-acid chain; its full sequence is Small ribosomal subunit protein uS9 (130 aa).

This sequence belongs to the universal ribosomal protein uS9 family.

This is Small ribosomal subunit protein uS9 from Herminiimonas arsenicoxydans.